The sequence spans 305 residues: Testis-expressed protein 52 (305 aa).

Residues 284–305 are disordered; it reads HLSKAQASKSPARKRKRRPGHF. Positions 294–305 are enriched in basic residues; sequence PARKRKRRPGHF.

As to expression, expressed in Testis.

The protein is Testis-expressed protein 52 of Homo sapiens (Human).